The chain runs to 205 residues: MADYTTIAAQPRNEFGKGFARRLRVAGQVPGVIYGVDVEAPIHFSINRLELHAVLRAHGVNAIIELDIEGEKHLTMIKHVDQNVLTLNADHVDLLAIKRGEKVEVEVPVVLTGETAPGTTLVQDADVVLVEADVLSIPEEITFSVEGLDVDSKVLAGDLAMPANTSLVADAETVIASVNHEEVAEEAEETEGEDAEEAPAAEGEE.

A disordered region spans residues 180 to 205 (HEEVAEEAEETEGEDAEEAPAAEGEE). Positions 183 to 205 (VAEEAEETEGEDAEEAPAAEGEE) are enriched in acidic residues.

Belongs to the bacterial ribosomal protein bL25 family. CTC subfamily. As to quaternary structure, part of the 50S ribosomal subunit; part of the 5S rRNA/L5/L18/L25 subcomplex. Contacts the 5S rRNA. Binds to the 5S rRNA independently of L5 and L18.

Functionally, this is one of the proteins that binds to the 5S RNA in the ribosome where it forms part of the central protuberance. In Corynebacterium diphtheriae (strain ATCC 700971 / NCTC 13129 / Biotype gravis), this protein is Large ribosomal subunit protein bL25.